Here is a 275-residue protein sequence, read N- to C-terminus: Diaminopimelate epimerase (275 aa).

Substrate is bound by residues N13, Q46, and N65. C74 (proton donor) is an active-site residue. Residues 75–76 (GN), N158, N191, and 209–210 (ER) each bind substrate. The active-site Proton acceptor is C218. 219-220 (GT) lines the substrate pocket.

The protein belongs to the diaminopimelate epimerase family. In terms of assembly, homodimer.

The protein resides in the cytoplasm. The enzyme catalyses (2S,6S)-2,6-diaminopimelate = meso-2,6-diaminopimelate. It functions in the pathway amino-acid biosynthesis; L-lysine biosynthesis via DAP pathway; DL-2,6-diaminopimelate from LL-2,6-diaminopimelate: step 1/1. Catalyzes the stereoinversion of LL-2,6-diaminopimelate (L,L-DAP) to meso-diaminopimelate (meso-DAP), a precursor of L-lysine and an essential component of the bacterial peptidoglycan. The polypeptide is Diaminopimelate epimerase (Nitrosomonas europaea (strain ATCC 19718 / CIP 103999 / KCTC 2705 / NBRC 14298)).